The chain runs to 214 residues: ATP phosphoribosyltransferase (214 aa).

The protein belongs to the ATP phosphoribosyltransferase family. Short subfamily. Heteromultimer composed of HisG and HisZ subunits.

The protein resides in the cytoplasm. The enzyme catalyses 1-(5-phospho-beta-D-ribosyl)-ATP + diphosphate = 5-phospho-alpha-D-ribose 1-diphosphate + ATP. It participates in amino-acid biosynthesis; L-histidine biosynthesis; L-histidine from 5-phospho-alpha-D-ribose 1-diphosphate: step 1/9. Its function is as follows. Catalyzes the condensation of ATP and 5-phosphoribose 1-diphosphate to form N'-(5'-phosphoribosyl)-ATP (PR-ATP). Has a crucial role in the pathway because the rate of histidine biosynthesis seems to be controlled primarily by regulation of HisG enzymatic activity. The sequence is that of ATP phosphoribosyltransferase from Alcanivorax borkumensis (strain ATCC 700651 / DSM 11573 / NCIMB 13689 / SK2).